Here is a 428-residue protein sequence, read N- to C-terminus: 3-phosphoshikimate 1-carboxyvinyltransferase (428 aa).

The 3-phosphoshikimate site is built by K20, S21, and R25. A phosphoenolpyruvate-binding site is contributed by K20. The phosphoenolpyruvate site is built by G92 and R120. 3-phosphoshikimate contacts are provided by S166, Q168, D314, and K341. Q168 contributes to the phosphoenolpyruvate binding site. D314 acts as the Proton acceptor in catalysis. Residues R345 and R387 each contribute to the phosphoenolpyruvate site.

It belongs to the EPSP synthase family. Monomer.

The protein localises to the cytoplasm. It catalyses the reaction 3-phosphoshikimate + phosphoenolpyruvate = 5-O-(1-carboxyvinyl)-3-phosphoshikimate + phosphate. Its pathway is metabolic intermediate biosynthesis; chorismate biosynthesis; chorismate from D-erythrose 4-phosphate and phosphoenolpyruvate: step 6/7. Functionally, catalyzes the transfer of the enolpyruvyl moiety of phosphoenolpyruvate (PEP) to the 5-hydroxyl of shikimate-3-phosphate (S3P) to produce enolpyruvyl shikimate-3-phosphate and inorganic phosphate. This Listeria welshimeri serovar 6b (strain ATCC 35897 / DSM 20650 / CCUG 15529 / CIP 8149 / NCTC 11857 / SLCC 5334 / V8) protein is 3-phosphoshikimate 1-carboxyvinyltransferase.